The sequence spans 815 residues: Plakophilin-2 (815 aa).

The span at 1–12 (MLKPHPEHKEQP) shows a compositional bias: basic and acidic residues. 2 disordered regions span residues 1-31 (MLKP…MAEE) and 76-105 (QLTL…ISSS). A compositionally biased stretch (polar residues) spans 13 to 25 (QDSFTPSGDSTPD). The span at 91 to 105 (SSLAESQSSCQISSS) shows a compositional bias: low complexity. ARM repeat units follow at residues 317 to 357 (KGKP…NQCF), 360 to 399 (PDAK…NIVF), 402 to 442 (NENK…NLSS), 457 to 498 (PLTD…NLSS), 501 to 547 (PDGR…NLSY), 604 to 644 (PHGV…NLTA), 652 to 691 (AIAH…NISR), 693 to 737 (RELH…NLSQ), and 740 to 783 (ASNT…TLWR).

Belongs to the beta-catenin family.

It is found in the nucleus. Its subcellular location is the cell junction. It localises to the desmosome. The protein localises to the cytoplasm. Functionally, required for development of the heart, potentially via cell-cell adhesion and modulation of expression of cardiac precursor genes. Plays a role in desmosome cell-cell junctions and their intracellular connectivity. This chain is Plakophilin-2, found in Danio rerio (Zebrafish).